We begin with the raw amino-acid sequence, 368 residues long: Glutamate 5-kinase (368 aa).

K9 lines the ATP pocket. Residues S49, D136, and N148 each contribute to the substrate site. Residues 168–169 (TD) and 210–216 (TGGMMTK) contribute to the ATP site. A PUA domain is found at 275–353 (AGIITIDNGA…ADIENVLGYE (79 aa)).

Belongs to the glutamate 5-kinase family.

It localises to the cytoplasm. It carries out the reaction L-glutamate + ATP = L-glutamyl 5-phosphate + ADP. The protein operates within amino-acid biosynthesis; L-proline biosynthesis; L-glutamate 5-semialdehyde from L-glutamate: step 1/2. Its function is as follows. Catalyzes the transfer of a phosphate group to glutamate to form L-glutamate 5-phosphate. This is Glutamate 5-kinase from Haemophilus influenzae (strain PittGG).